The primary structure comprises 174 residues: Nicotinamide-nucleotide adenylyltransferase (174 aa).

It belongs to the archaeal NMN adenylyltransferase family.

It is found in the cytoplasm. The enzyme catalyses beta-nicotinamide D-ribonucleotide + ATP + H(+) = diphosphate + NAD(+). It participates in cofactor biosynthesis; NAD(+) biosynthesis; NAD(+) from nicotinamide D-ribonucleotide: step 1/1. The sequence is that of Nicotinamide-nucleotide adenylyltransferase from Archaeoglobus fulgidus (strain ATCC 49558 / DSM 4304 / JCM 9628 / NBRC 100126 / VC-16).